We begin with the raw amino-acid sequence, 189 residues long: UPF0301 protein PputW619_0469 (189 aa).

Belongs to the UPF0301 (AlgH) family.

The sequence is that of UPF0301 protein PputW619_0469 from Pseudomonas putida (strain W619).